A 332-amino-acid chain; its full sequence is Malate dehydrogenase (332 aa).

An NAD(+)-binding site is contributed by 15-21 (GAAGHIG). Substrate contacts are provided by Arg-96 and Arg-102. NAD(+)-binding positions include Asn-109 and 133–135 (VGN). Asn-135 and Arg-166 together coordinate substrate. His-191 (proton acceptor) is an active-site residue.

This sequence belongs to the LDH/MDH superfamily. MDH type 2 family.

It catalyses the reaction (S)-malate + NAD(+) = oxaloacetate + NADH + H(+). Catalyzes the reversible oxidation of malate to oxaloacetate. The protein is Malate dehydrogenase of Mycolicibacterium vanbaalenii (strain DSM 7251 / JCM 13017 / BCRC 16820 / KCTC 9966 / NRRL B-24157 / PYR-1) (Mycobacterium vanbaalenii).